We begin with the raw amino-acid sequence, 438 residues long: MESQQLHQNPHSLHGSAYASVTSKEVPSNQDPLAVSASNLPEFDRDSTKVNSQQETTPGTSAVPENHHHVSPQPASVPPPQNGQYQQHGMMTPNKAMASNWAHYQQPSMMTCSHYQTSPAYYQPDPHYPLPQYIPPLSTSSPDPIDLKNQHSEIPQAKTKVGNNVLPPHTLTSEENFSTWVKFYIRFLKNSNLGDIIPNDQGEIKRQMTYEEHAYIYNTFQAFAPFHLLPTWVKQILEINYADILTVLCKSVSKMQTNNQELKDWIALANLEYDGSTSADTFEITVSTIIQRLKENNINVSDRLACQLILKGLSGDFKYLRNQYRTKTNMKLSQLFAEIQLIYDENKIMNLNKPSQYKQHSEYKNVSRTSPNTTNTKVTTRNYHRTNSSKPRAAKAHNIATSSKFSRVNNDHINESTVSSQYLSDDDELSLRPATERI.

Polar residues-rich tracts occupy residues 1 to 11 (MESQQLHQNPH), 19 to 39 (ASVT…SASN), and 49 to 60 (KVNSQQETTPGT). Disordered regions lie at residues 1–86 (MESQ…GQYQ), 360–403 (HSEY…ATSS), and 418–438 (VSSQ…TERI). Residues 295-397 (ENNINVSDRL…SSKPRAAKAH (103 aa)) form an RNA-binding region. The segment covering 369 to 381 (TSPNTTNTKVTTR) has biased composition (low complexity).

As to quaternary structure, homotrimer.

The protein resides in the cytoplasm. Its function is as follows. Capsid protein (CA) is the structural component of the virus-like particle (VLP), forming the shell that encapsulates the retrotransposons dimeric RNA genome. The particles are assembled from trimer-clustered units and there are holes in the capsid shells that allow for the diffusion of macromolecules. CA also has nucleocapsid-like chaperone activity, promoting primer tRNA(i)-Met annealing to the multipartite primer-binding site (PBS), dimerization of Ty2 RNA and initiation of reverse transcription. This is Transposon Ty2-GR1 Gag polyprotein (TY2A-GR1) from Saccharomyces cerevisiae (strain ATCC 204508 / S288c) (Baker's yeast).